A 600-amino-acid polypeptide reads, in one-letter code: Torsin-1A-interacting protein 1 (600 aa).

Basic and acidic residues predominate over residues 1 to 14; the sequence is MAGEGQRAEPEREG. Disordered stretches follow at residues 1 to 261 and 310 to 346; these read MAGE…YKES and MRSIYGSFSDDDSVQKSELGNQSPSTSNQQMTGQPKS. Residues 1-354 lie on the Nuclear side of the membrane; the sequence is MAGEGQRAEP…KSVSSVKTKR (354 aa). Ser61 is subject to Phosphoserine. Basic and acidic residues-rich tracts occupy residues 71–81, 91–102, and 116–125; these read FEPRAAKEKAR, FRPDSAKEEVRE, and RLHEAEEMQT. 6 positions are modified to phosphoserine: Ser137, Ser145, Ser156, Ser158, Ser159, and Ser189. The span at 192-203 shows a compositional bias: low complexity; sequence PLISLRRPPLRS. The span at 219–232 shows a compositional bias: acidic residues; the sequence is EEGETEENDQDSFD. Thr223 carries the phosphothreonine modification. Ser230, Ser233, and Ser244 each carry phosphoserine. Positions 247–261 are enriched in polar residues; the sequence is SGDQTTRSSSQYKES. Position 322 is a phosphoserine (Ser322). Lys325 participates in a covalent cross-link: Glycyl lysine isopeptide (Lys-Gly) (interchain with G-Cter in SUMO2). Over residues 325–346 the composition is skewed to polar residues; the sequence is KSELGNQSPSTSNQQMTGQPKS. Ser332 is subject to Phosphoserine. The helical transmembrane segment at 355–371 threads the bilayer; it reads YWPFAVIAALLIGGFLY. Topologically, residues 372–600 are perinuclear space; sequence TRPPEAETTA…ENDLKKGICL (229 aa). Residues 373–600 are interaction with TOR1A; that stretch reads RPPEAETTAV…ENDLKKGICL (228 aa). Residues 376-452 adopt a coiled-coil conformation; it reads EAETTAVQEF…SEQIADAYSS (77 aa). An N-linked (GlcNAc...) asparagine glycan is attached at Asn416.

It belongs to the TOR1AIP family. Interacts with ATP1B4. Interacts with TOR1A (ATP-bound). Interacts with TOR1B, TOR2A and TOR3A. Interacts with VIM.

The protein resides in the nucleus inner membrane. Its function is as follows. Required for nuclear membrane integrity. Induces TOR1A and TOR1B ATPase activity and is required for their location on the nuclear membrane. Binds to A- and B-type lamins. Possible role in membrane attachment and assembly of the nuclear lamina. This Bos taurus (Bovine) protein is Torsin-1A-interacting protein 1 (TOR1AIP1).